A 106-amino-acid chain; its full sequence is Large ribosomal subunit protein bL21 (106 aa).

It belongs to the bacterial ribosomal protein bL21 family. Part of the 50S ribosomal subunit. Contacts protein L20.

Functionally, this protein binds to 23S rRNA in the presence of protein L20. The protein is Large ribosomal subunit protein bL21 of Chlamydia felis (strain Fe/C-56) (Chlamydophila felis).